The sequence spans 84 residues: Large ribosomal subunit protein uL23 (84 aa).

It belongs to the universal ribosomal protein uL23 family. In terms of assembly, part of the 50S ribosomal subunit. Contacts protein L29.

Binds to 23S rRNA. One of the proteins that surrounds the polypeptide exit tunnel on the outside of the ribosome. The sequence is that of Large ribosomal subunit protein uL23 from Halobacterium salinarum (strain ATCC 700922 / JCM 11081 / NRC-1) (Halobacterium halobium).